The chain runs to 228 residues: Ureidoacrylate amidohydrolase RutB (228 aa).

Aspartate 23 serves as the catalytic Proton acceptor. Lysine 132 is a catalytic residue. The active-site Nucleophile is cysteine 165.

The protein belongs to the isochorismatase family. RutB subfamily.

The enzyme catalyses (Z)-3-ureidoacrylate + H2O + H(+) = (Z)-3-aminoacrylate + NH4(+) + CO2. It carries out the reaction (Z)-3-ureidoacrylate + H2O = (Z)-3-aminoacrylate + carbamate + H(+). It catalyses the reaction (Z)-2-methylureidoacrylate + H2O + H(+) = (Z)-2-methylaminoacrylate + NH4(+) + CO2. Its function is as follows. Hydrolyzes ureidoacrylate to form aminoacrylate and carbamate. The carbamate hydrolyzes spontaneously, thereby releasing one of the nitrogen atoms of the pyrimidine ring as ammonia and one of its carbon atoms as CO2. The protein is Ureidoacrylate amidohydrolase RutB of Agrobacterium fabrum (strain C58 / ATCC 33970) (Agrobacterium tumefaciens (strain C58)).